We begin with the raw amino-acid sequence, 735 residues long: Protein-associating with the carboxyl-terminal domain of ezrin (735 aa).

The N-myristoyl glycine moiety is linked to residue glycine 2. In terms of domain architecture, Protein kinase spans 2–245 (GSENSALKSY…LSTLLSHDFF (244 aa)). HEAT repeat units follow at residues 194 to 249 (FGAL…RNDF), 285 to 323 (LIASRLVPLLLNQLVFAEPVAVKSFLPYLLGPKKENAPG), 333 to 370 (LFQSRVIPVLLRLFEVHEEHVRMVLLSHIEAYVEHFTQ), and 372 to 409 (QLKKVILPQVLLGLRDTSNSIVAITLRSLAVLVSLLGP). Residue serine 439 is modified to Phosphoserine. Disordered regions lie at residues 505–545 (LSDV…ASIH) and 604–648 (VPLT…GLGL). Positions 528-538 (WPDWSEPEEPE) are enriched in acidic residues. An interaction with EZR region spans residues 547–735 (WPREPCDVAE…EELAWEDNNW (189 aa)). Serine 701 carries the post-translational modification Phosphoserine.

Belongs to the protein kinase superfamily. As to quaternary structure, interacts with EZR/VIL2 C-terminal domain. In terms of processing, may be myristoylated; myristoylation may target it to Golgi compartment.

It is found in the cytoplasm. It localises to the golgi apparatus. The protein resides in the cell projection. Its subcellular location is the lamellipodium. Its function is as follows. May play a role in regulating cell adhesion/migration complexes in migrating cells. In Mus musculus (Mouse), this protein is Protein-associating with the carboxyl-terminal domain of ezrin (Scyl3).